The chain runs to 284 residues: NAD kinase (284 aa).

The active-site Proton acceptor is the D70. NAD(+) is bound by residues 70–71 (DG), 139–140 (NE), K167, D169, L177, 180–185 (TAYNLS), and Q236.

This sequence belongs to the NAD kinase family. The cofactor is a divalent metal cation.

Its subcellular location is the cytoplasm. The catalysed reaction is NAD(+) + ATP = ADP + NADP(+) + H(+). Functionally, involved in the regulation of the intracellular balance of NAD and NADP, and is a key enzyme in the biosynthesis of NADP. Catalyzes specifically the phosphorylation on 2'-hydroxyl of the adenosine moiety of NAD to yield NADP. This is NAD kinase from Helicobacter pylori (strain HPAG1).